A 107-amino-acid chain; its full sequence is Regulatory protein SoxS (107 aa).

Residues 8-106 (QDLIAWIDEH…DRTPSDYRHR (99 aa)) enclose the HTH araC/xylS-type domain. 2 DNA-binding regions (H-T-H motif) span residues 25–46 (DVVA…RTVT) and 73–96 (IFDI…RRQF).

Its subcellular location is the cytoplasm. In terms of biological role, transcriptional activator of the superoxide response regulon of E.coli that includes at least 10 genes such as sodA, nfo, zwf and micF. Binds the DNA sequence 5'-GCACN(7)CAA-3'. It also facilitates the subsequent binding of RNA polymerase to the micF and the nfo promoters. The polypeptide is Regulatory protein SoxS (soxS) (Escherichia coli O157:H7).